The chain runs to 84 residues: RQC P-site tRNA stabilizing factor (84 aa).

In terms of domain architecture, S4 RNA-binding spans Met-1–Pro-64.

The protein belongs to the RqcP family. Associates with stalled 50S ribosomal subunits. Binds to RqcH, 23S rRNA and the P-site tRNA. Does not require RqcH for association with 50S subunits.

In terms of biological role, key component of the ribosome quality control system (RQC), a ribosome-associated complex that mediates the extraction of incompletely synthesized nascent chains from stalled ribosomes and their subsequent degradation. RqcH recruits Ala-charged tRNA, and with RqcP directs the elongation of stalled nascent chains on 50S ribosomal subunits, leading to non-templated C-terminal alanine extensions (Ala tail). The Ala tail promotes nascent chain degradation. RqcP is associated with the translocation-like movement of the peptidyl-tRNA from the A-site into the P-site. The protein is RQC P-site tRNA stabilizing factor of Helicobacter pylori (strain ATCC 700392 / 26695) (Campylobacter pylori).